The primary structure comprises 706 residues: Fatty acid oxidation complex subunit alpha (706 aa).

An enoyl-CoA hydratase region spans residues 1 to 188; the sequence is MEKTFNLTRR…KMGLVNDVVP (188 aa). The segment at 308 to 706 is 3-hydroxyacyl-CoA dehydrogenase; it reads RKVKKAVILG…TMARENVSFF (399 aa).

In the N-terminal section; belongs to the enoyl-CoA hydratase/isomerase family. The protein in the central section; belongs to the 3-hydroxyacyl-CoA dehydrogenase family. Heterotetramer of two alpha chains (FadJ) and two beta chains (FadI).

Its subcellular location is the cytoplasm. It catalyses the reaction a (3S)-3-hydroxyacyl-CoA = a (2E)-enoyl-CoA + H2O. It carries out the reaction a 4-saturated-(3S)-3-hydroxyacyl-CoA = a (3E)-enoyl-CoA + H2O. The catalysed reaction is a (3S)-3-hydroxyacyl-CoA + NAD(+) = a 3-oxoacyl-CoA + NADH + H(+). The enzyme catalyses (3S)-3-hydroxybutanoyl-CoA = (3R)-3-hydroxybutanoyl-CoA. The protein operates within lipid metabolism; fatty acid beta-oxidation. Catalyzes the formation of a hydroxyacyl-CoA by addition of water on enoyl-CoA. Also exhibits 3-hydroxyacyl-CoA epimerase and 3-hydroxyacyl-CoA dehydrogenase activities. This chain is Fatty acid oxidation complex subunit alpha, found in Shewanella putrefaciens (strain CN-32 / ATCC BAA-453).